The chain runs to 304 residues: Tyrosine recombinase XerD (304 aa).

The 92-residue stretch at 1 to 92 folds into the Core-binding (CB) domain; the sequence is MKARVLAKTW…VARGLHKFAL (92 aa). The region spanning 113 to 298 is the Tyr recombinase domain; the sequence is HLPDTLSINE…TADSLREVWR (186 aa). Catalysis depends on residues arginine 156, lysine 180, histidine 250, arginine 253, and histidine 276. The active-site O-(3'-phospho-DNA)-tyrosine intermediate is tyrosine 285.

The protein belongs to the 'phage' integrase family. XerD subfamily. In terms of assembly, forms a cyclic heterotetrameric complex composed of two molecules of XerC and two molecules of XerD.

The protein localises to the cytoplasm. In terms of biological role, site-specific tyrosine recombinase, which acts by catalyzing the cutting and rejoining of the recombining DNA molecules. The XerC-XerD complex is essential to convert dimers of the bacterial chromosome into monomers to permit their segregation at cell division. It also contributes to the segregational stability of plasmids. The protein is Tyrosine recombinase XerD of Corynebacterium glutamicum (strain ATCC 13032 / DSM 20300 / JCM 1318 / BCRC 11384 / CCUG 27702 / LMG 3730 / NBRC 12168 / NCIMB 10025 / NRRL B-2784 / 534).